A 331-amino-acid polypeptide reads, in one-letter code: ATP-dependent 6-phosphofructokinase (331 aa).

Glycine 12 serves as a coordination point for ATP. ADP-binding positions include 22 to 26 (RGVVR) and 55 to 60 (RYSVSD). ATP is bound by residues 73 to 74 (RF) and 103 to 106 (GDGS). Position 104 (aspartate 104) interacts with Mg(2+). 127–129 (TID) lines the substrate pocket. Catalysis depends on aspartate 129, which acts as the Proton acceptor. Arginine 156 contacts ADP. Substrate is bound by residues arginine 164 and 171–173 (MGR). ADP is bound by residues 187–189 (GCE), lysine 213, and 215–217 (KKH). Residues glutamate 224, arginine 245, and 251-254 (HIQR) each bind substrate.

This sequence belongs to the phosphofructokinase type A (PFKA) family. ATP-dependent PFK group I subfamily. Prokaryotic clade 'B1' sub-subfamily. Homotetramer. Mg(2+) serves as cofactor.

The protein localises to the cytoplasm. The catalysed reaction is beta-D-fructose 6-phosphate + ATP = beta-D-fructose 1,6-bisphosphate + ADP + H(+). It participates in carbohydrate degradation; glycolysis; D-glyceraldehyde 3-phosphate and glycerone phosphate from D-glucose: step 3/4. Its activity is regulated as follows. Allosterically activated by ADP and other diphosphonucleosides, and allosterically inhibited by phosphoenolpyruvate. In terms of biological role, catalyzes the phosphorylation of D-fructose 6-phosphate to fructose 1,6-bisphosphate by ATP, the first committing step of glycolysis. This Yersinia enterocolitica serotype O:8 / biotype 1B (strain NCTC 13174 / 8081) protein is ATP-dependent 6-phosphofructokinase.